We begin with the raw amino-acid sequence, 431 residues long: Histidinol dehydrogenase (431 aa).

3 residues coordinate NAD(+): Tyr-127, Gln-190, and Asn-213. Positions 238, 260, and 263 each coordinate substrate. Zn(2+) contacts are provided by Gln-260 and His-263. Active-site proton acceptor residues include Glu-329 and His-330. The substrate site is built by His-330, Asp-363, Glu-417, and His-422. A Zn(2+)-binding site is contributed by Asp-363. His-422 is a binding site for Zn(2+).

This sequence belongs to the histidinol dehydrogenase family. Requires Zn(2+) as cofactor.

It catalyses the reaction L-histidinol + 2 NAD(+) + H2O = L-histidine + 2 NADH + 3 H(+). Its pathway is amino-acid biosynthesis; L-histidine biosynthesis; L-histidine from 5-phospho-alpha-D-ribose 1-diphosphate: step 9/9. Functionally, catalyzes the sequential NAD-dependent oxidations of L-histidinol to L-histidinaldehyde and then to L-histidine. The protein is Histidinol dehydrogenase of Methanopyrus kandleri (strain AV19 / DSM 6324 / JCM 9639 / NBRC 100938).